Reading from the N-terminus, the 277-residue chain is Bifunctional protein FolD (277 aa).

NADP(+) is bound by residues 164 to 166 (GRS), Ser-189, and Thr-230.

It belongs to the tetrahydrofolate dehydrogenase/cyclohydrolase family. In terms of assembly, homodimer.

The enzyme catalyses (6R)-5,10-methylene-5,6,7,8-tetrahydrofolate + NADP(+) = (6R)-5,10-methenyltetrahydrofolate + NADPH. It catalyses the reaction (6R)-5,10-methenyltetrahydrofolate + H2O = (6R)-10-formyltetrahydrofolate + H(+). Its pathway is one-carbon metabolism; tetrahydrofolate interconversion. In terms of biological role, catalyzes the oxidation of 5,10-methylenetetrahydrofolate to 5,10-methenyltetrahydrofolate and then the hydrolysis of 5,10-methenyltetrahydrofolate to 10-formyltetrahydrofolate. The sequence is that of Bifunctional protein FolD from Clostridium perfringens (strain 13 / Type A).